Reading from the N-terminus, the 90-residue chain is U7-theraphotoxin-Hhn1a 8 (90 aa).

An N-terminal signal peptide occupies residues 1-19; it reads MKTAIFTVVLALAVFAVLS. The propeptide occupies 20 to 50; it reads FGWEANEKALSEEFTELIHEKGAASETEARE. 3 disulfide bridges follow: Cys51–Cys65, Cys58–Cys70, and Cys64–Cys81.

This sequence belongs to the neurotoxin 10 (Hwtx-1) family. 13 (Hntx-13) subfamily. As to expression, expressed by the venom gland.

Its subcellular location is the secreted. Its function is as follows. Ion channel inhibitor. This chain is U7-theraphotoxin-Hhn1a 8, found in Cyriopagopus hainanus (Chinese bird spider).